Reading from the N-terminus, the 368-residue chain is MSILEKVQPIETMLPERYYTMSTENMEKRVREIKEKMGGKLFIPGHHYQKDEVVQFSDAAGDSLQLAQVAASNKEAKYIVFCGVHFMAETADMLTTDDQIVILPDMRAGCSMADMADIEQTERAWKELMKLFGDTMIPLTYVNSTAAIKAFCGRNGGATVTSSNAKQMVSWAFTQKERLVFLPDQHLGRNTAYDLGIPLDKMAVWDPHTDSLEYDGDIEEIQVILWKGHCSVHQNFTVKNIENVRKNHPDMNIIVHPECCYEVVAASDYAGSTKYIIDMIESAPSGSKWAIGTEMNLVNRIIQQHPDKEIVSLNPFMCPCLTMNRIDLPHLLWALETIERGEEINVISVDKQVTEEAVLALNRMLERV.

The iminosuccinate site is built by His-46 and Ser-63. Position 110 (Cys-110) interacts with [4Fe-4S] cluster. Iminosuccinate-binding positions include 141–143 and Ser-162; that span reads YVN. Cys-230 is a [4Fe-4S] cluster binding site. Iminosuccinate contacts are provided by residues 256–258 and Thr-273; that span reads HPE. Cys-320 is a [4Fe-4S] cluster binding site.

Belongs to the quinolinate synthase family. Type 3 subfamily. The cofactor is [4Fe-4S] cluster.

The protein localises to the cytoplasm. The catalysed reaction is iminosuccinate + dihydroxyacetone phosphate = quinolinate + phosphate + 2 H2O + H(+). The protein operates within cofactor biosynthesis; NAD(+) biosynthesis; quinolinate from iminoaspartate: step 1/1. Its function is as follows. Catalyzes the condensation of iminoaspartate with dihydroxyacetone phosphate to form quinolinate. This is Quinolinate synthase from Bacillus cereus (strain Q1).